Consider the following 138-residue polypeptide: Large ribosomal subunit protein bL19 (138 aa).

Belongs to the bacterial ribosomal protein bL19 family.

This protein is located at the 30S-50S ribosomal subunit interface and may play a role in the structure and function of the aminoacyl-tRNA binding site. This is Large ribosomal subunit protein bL19 from Rickettsia felis (strain ATCC VR-1525 / URRWXCal2) (Rickettsia azadi).